A 488-amino-acid polypeptide reads, in one-letter code: PPE family protein PPE10 (488 aa).

Disordered regions lie at residues 207-232 (NNNW…NIGS) and 443-488 (SDAG…LRTE).

The protein belongs to the mycobacterial PPE family.

It is found in the secreted. Its function is as follows. Plays a major role in the integrity and stability of the capsule. This Mycobacterium marinum (strain ATCC BAA-535 / M) protein is PPE family protein PPE10.